The primary structure comprises 919 residues: Glutamate receptor ionotropic, kainate 3 (919 aa).

An N-terminal signal peptide occupies residues 1–31; the sequence is MTAPWRRLRSLVWEYWAGFLVCAFWIPDSRG. The Extracellular segment spans residues 32 to 563; it reads MPHVIRIGGI…VFSFLNPLSP (532 aa). Residues Asn-70, Asn-76, Asn-278, Asn-381, Asn-415, Asn-426, and Asn-433 are each glycosylated (N-linked (GlcNAc...) asparagine). Cys-99 and Cys-350 form a disulfide bridge. The L-glutamate site is built by Pro-518, Thr-520, and Arg-525. Residues Asn-548 and Asn-551 are each glycosylated (N-linked (GlcNAc...) asparagine). Residues 564 to 584 traverse the membrane as a helical segment; that stretch reads DIWMYVLLAYLGVSCVLFVIA. Over 585 to 636 the chain is Cytoplasmic; it reads RFSPYEWYDAHPCNPGSEVVENNFTLLNSFWFGMGSLMQQGSELMPKALSTR. Residues 637–657 form a helical membrane-spanning segment; that stretch reads IIGGIWWFFTLIIISSYTANL. Topologically, residues 658–820 are extracellular; it reads AAFLTVERME…KEASALGIQK (163 aa). 3 residues coordinate L-glutamate: Ala-691, Thr-692, and Glu-739. A glycan (N-linked (GlcNAc...) asparagine) is linked at Asn-752. The helical transmembrane segment at 821–841 threads the bilayer; it reads IGGIFIVLAAGLVLSVLVAVG. Over 842–919 the chain is Cytoplasmic; it reads EFIYKLRKTA…CSTSLAPVFP (78 aa). Ser-869 carries the post-translational modification Phosphoserine. Residue Lys-887 forms a Glycyl lysine isopeptide (Lys-Gly) (interchain with G-Cter in SUMO1) linkage.

The protein belongs to the glutamate-gated ion channel (TC 1.A.10.1) family. GRIK3 subfamily. Homotetramer, and heterotetramer with either GRIK4 or GRIK5. Can form functional heteromeric receptors with GRIK2. Interacts with PRKCABP. Interacts with NETO2. Detected in whole brain, cerebellum, brain cortex and hippocampus.

It is found in the cell membrane. The protein localises to the postsynaptic cell membrane. The enzyme catalyses Ca(2+)(in) = Ca(2+)(out). Its activity is regulated as follows. Glutamate-gated receptor activity inhibited by spermine. In terms of biological role, ionotropic glutamate receptor that functions as a cation-permeable ligand-gated ion channel, gated by L-glutamate and the glutamatergic agonist kainic acid. Binding of the excitatory neurotransmitter L-glutamate induces a conformation change, leading to the opening of the cation channel, and thereby converts the chemical signal to an electrical impulse. The receptor then desensitizes rapidly and enters a transient inactive state, characterized by the presence of bound agonist. In association with GRIK2, involved in presynaptic facilitation of glutamate release at hippocampal mossy fiber synapses. This Mus musculus (Mouse) protein is Glutamate receptor ionotropic, kainate 3 (Grik3).